The following is a 196-amino-acid chain: Shikimate kinase (196 aa).

21-26 (GTGKSR) contributes to the ATP binding site. Ser-25 is a Mg(2+) binding site. Asp-43, Arg-67, and Gly-89 together coordinate substrate. Position 126 (Arg-126) interacts with ATP. Arg-145 is a binding site for substrate. Position 161 (Arg-161) interacts with ATP.

The protein belongs to the shikimate kinase family. As to quaternary structure, monomer. The cofactor is Mg(2+).

It is found in the cytoplasm. The catalysed reaction is shikimate + ATP = 3-phosphoshikimate + ADP + H(+). The protein operates within metabolic intermediate biosynthesis; chorismate biosynthesis; chorismate from D-erythrose 4-phosphate and phosphoenolpyruvate: step 5/7. Its function is as follows. Catalyzes the specific phosphorylation of the 3-hydroxyl group of shikimic acid using ATP as a cosubstrate. The polypeptide is Shikimate kinase (Deinococcus radiodurans (strain ATCC 13939 / DSM 20539 / JCM 16871 / CCUG 27074 / LMG 4051 / NBRC 15346 / NCIMB 9279 / VKM B-1422 / R1)).